The chain runs to 122 residues: Serum amyloid A-1 protein (122 aa).

Residues 1–19 (MKLLSGLLLCSLVLGVSSQ) form the signal peptide. The interval 20 to 45 (RWFSFIGEATQGAWDMWRAYSDMREA) is important for amyloid formation. The interval 87-122 (MGHGAEDSMADQAANEWGRSGKDPNHFRPKGLPDKY) is disordered. The span at 105 to 122 (RSGKDPNHFRPKGLPDKY) shows a compositional bias: basic and acidic residues.

This sequence belongs to the SAA family. In terms of assembly, homohexamer; dimer of trimers. Can form amyloid fibrils after partial proteolysis; the native, undenatured protein does not form amyloid fibrils (in vitro). Apolipoprotein of the HDL complex. Binds to heparin. In terms of tissue distribution, detected in liver.

The protein resides in the secreted. Its function is as follows. Major acute phase protein. The polypeptide is Serum amyloid A-1 protein (SAA1) (Oryctolagus cuniculus (Rabbit)).